Reading from the N-terminus, the 697-residue chain is MERNHWNEKSSGAKRSRERDLTLSTIRSILAADERLRIKASSYLGVGRGVDDEAVIDIFPTGQTMSFLRLLHGFLGTCRGQSMHQVLRDPCVLRKQLLYGVCKTLFDTITVRRVAEEWKLHAALFPYRALDEEDLEQYLLVWSASLRQSVQTGVLGALRDILYQYADNDDYGLYVDWCVTVGLVPLLDVKTKPSEAAERAQFVRAAVQRATETHPLAQDLLQANLALLLQVAERLGAVRVANAPEVRVFKKVRSERLEAQLRGKHIRLYVAAEPLAYERDKLLFTTPVAHLHEEILRYDGLCRHQKICQLLNTFPVKVVTASRHELNCKKLVEMMEQHDRGSDAKKSIMKFLLNVSDSKSRIGIEDSVESFLQDLTPSLVDQNRLLPARGPGGPGVVGPGGAVVGGPAGHVGLLPPPPGPAAPERDIRDLFKKQVIKCLEEQIQSQVDEIQDLRTLNQTWENRVRELRDLLTRYASRREDSMSLGARDAELYHLPVLEAVRKARDAAPFRPLAVEDNRLVANSFFSQFVPGTESLERFLTQLWENEYFRTFRLRRLVTHQGAEEAIVYSNYTVERVTLPYLCHILALGTLDPVPEAYLQLSFGEIVAAAYDDSKFCRYVELICSREKARRRQMSREAAGGVPERGTASSGGPGTLERSAPRRLITADEERRGPERVGRFRNGGPDDPRRAGGPYGFH.

Residues 633 to 697 (MSREAAGGVP…RRAGGPYGFH (65 aa)) form a disordered region. Basic and acidic residues predominate over residues 664–689 (ITADEERRGPERVGRFRNGGPDDPRR).

This sequence belongs to the herpesviridae portal protein family. Homododecamerizes. Interacts with terminase subunits TRM1 and TRM3.

It localises to the virion. Its subcellular location is the host nucleus. Forms a portal in the viral capsid through which viral DNA is translocated during DNA packaging. Assembles as a dodecamer at a single fivefold axe of the T=16 icosahedric capsid. Binds to the molecular motor that translocates the viral DNA, termed terminase. The sequence is that of Portal protein (UL104) from Homo sapiens (Human).